A 608-amino-acid chain; its full sequence is Albumin 2 (608 aa).

The first 14 residues, 1 to 14, serve as a signal peptide directing secretion; it reads MQWLSVCSLLVLLS. A propeptide spanning residues 15–18 is cleaved from the precursor; it reads VLSR. Albumin domains lie at 19 to 205, 206 to 398, and 402 to 600; these read SQAQ…TFQH, AIAK…AGSD, and KITD…KLVS. 18 disulfide bridges follow: C26–C72, C71–C80, C93–C108, C107–C118, C142–C187, C186–C195, C218–C264, C263–C271, C283–C299, C298–C309, C336–C381, C380–C389, C414–C460, C459–C471, C484–C500, C499–C510, C537–C582, and C581–C590. A glycan (N-linked (GlcNAc...) asparagine) is linked at N501.

Belongs to the ALB/AFP/VDB family. Plasma.

Its subcellular location is the secreted. Binds water, Ca(2+), Na(+), K(+), fatty acids, hormones, bilirubin and drugs. Its main function is the regulation of the colloidal osmotic pressure of blood. The chain is Albumin 2 (alb2) from Salmo salar (Atlantic salmon).